Here is a 228-residue protein sequence, read N- to C-terminus: DNA repair and recombination protein RadB (228 aa).

It belongs to the eukaryotic RecA-like protein family. RadB subfamily.

Functionally, involved in DNA repair and in homologous recombination. May regulate the cleavage reactions of the branch-structured DNA. Has a very weak ATPase activity that is not stimulated by DNA. Binds DNA but does not promote DNA strands exchange. This is DNA repair and recombination protein RadB from Thermococcus sibiricus (strain DSM 12597 / MM 739).